We begin with the raw amino-acid sequence, 1332 residues long: Sister chromatid cohesion protein PDS5 homolog A (1332 aa).

Methionine 1 is modified (N-acetylmethionine). One copy of the HEAT repeat lies at 392-428 (ALVNDQLLGFVRERTLDKRWRVRKEAMMGLAQLYKKY). Serine 1096 is modified (phosphoserine). Residues 1138–1332 (GVLGTVNKPL…PAERQIDLQR (195 aa)) form a disordered region. Lysine 1145 carries the N6-acetyllysine modification. Residues 1160-1173 (GTETGSNINANSEL) are compositionally biased toward polar residues. 2 positions are modified to phosphoserine: serine 1174 and serine 1194. A Phosphothreonine modification is found at threonine 1207. N6-acetyllysine is present on lysine 1210. The segment covering 1222–1232 (SDQSTQGNISS) has biased composition (polar residues). At lysine 1288 the chain carries N6-acetyllysine. A Phosphoserine modification is found at serine 1303. The segment covering 1316–1332 (DGAKKAVPAERQIDLQR) has biased composition (basic and acidic residues).

This sequence belongs to the PDS5 family. Interacts with the cohesin complex. Interacts with WAPL (via FGF motifs) or CDCA5 (via the FGF motif); the interaction is direct, cohesin-dependent and competitive. Interacts with SMC3. Interacts with TP63.

The protein localises to the nucleus. Its function is as follows. Probable regulator of sister chromatid cohesion in mitosis which may stabilize cohesin complex association with chromatin. May couple sister chromatid cohesion during mitosis to DNA replication. Cohesion ensures that chromosome partitioning is accurate in both meiotic and mitotic cells and plays an important role in DNA repair. The chain is Sister chromatid cohesion protein PDS5 homolog A (Pds5a) from Mus musculus (Mouse).